Consider the following 146-residue polypeptide: UPF0260 protein Sama_1927 (146 aa).

This sequence belongs to the UPF0260 family.

In Shewanella amazonensis (strain ATCC BAA-1098 / SB2B), this protein is UPF0260 protein Sama_1927.